The following is an 802-amino-acid chain: Acetyl-CoA decarbonylase/synthase complex subunit alpha 1 (802 aa).

[4Fe-4S] cluster-binding residues include cysteine 68, cysteine 71, cysteine 76, and cysteine 86. CO is bound at residue histidine 109. [Ni-4Fe-4S] cluster-binding residues include histidine 243, cysteine 271, and cysteine 310. 4Fe-4S ferredoxin-type domains lie at 395–424 (DEAL…VDQG) and 435–464 (SKLA…INVI). Residues cysteine 405, cysteine 408, cysteine 411, cysteine 415, cysteine 444, cysteine 447, cysteine 450, and cysteine 454 each coordinate [4Fe-4S] cluster. Residues cysteine 512, cysteine 541, and cysteine 576 each coordinate [Ni-4Fe-4S] cluster.

Belongs to the Ni-containing carbon monoxide dehydrogenase family. As to quaternary structure, heterotetramer of two alpha and two epsilon subunits. The ACDS complex is made up of alpha, epsilon, beta, gamma and delta subunits with a probable stoichiometry of (alpha(2)epsilon(2))(4)-beta(8)-(gamma(1)delta(1))(8). Requires [4Fe-4S] cluster as cofactor. The cofactor is [Ni-4Fe-4S] cluster.

It catalyses the reaction CO + 2 oxidized [2Fe-2S]-[ferredoxin] + H2O = 2 reduced [2Fe-2S]-[ferredoxin] + CO2 + 2 H(+). Functionally, part of the ACDS complex that catalyzes the reversible cleavage of acetyl-CoA, allowing autotrophic growth from CO(2). The alpha-epsilon subcomponent functions as a carbon monoxide dehydrogenase. This is Acetyl-CoA decarbonylase/synthase complex subunit alpha 1 from Archaeoglobus fulgidus (strain ATCC 49558 / DSM 4304 / JCM 9628 / NBRC 100126 / VC-16).